The following is a 255-amino-acid chain: Putative Myb family transcription factor At1g14600 (255 aa).

The 61-residue stretch at 20–80 folds into the HTH myb-type domain; that stretch reads RSPVPRLRWT…HLQMYRGSRI (61 aa). The H-T-H motif DNA-binding region spans 51–76; that stretch reads PKLVLKIMDVKGLTISHVKSHLQMYR. The interval 80-110 is disordered; it reads ITLLGKPEESSSPSSRRRRRQDNEEDHLHDN.

Its subcellular location is the nucleus. In terms of biological role, putative transcription factor. The polypeptide is Putative Myb family transcription factor At1g14600 (Arabidopsis thaliana (Mouse-ear cress)).